Reading from the N-terminus, the 472-residue chain is Poly(A) polymerase catalytic subunit (472 aa).

Residues Asp194 and Asp196 contribute to the active site.

It belongs to the poxviridae poly(A) polymerase catalytic subunit family. Heterodimer of a large (catalytic) subunit and a small (regulatory) subunit.

The enzyme catalyses RNA(n) + ATP = RNA(n)-3'-adenine ribonucleotide + diphosphate. Polymerase that creates the 3'-poly(A) tail of mRNA's. The polypeptide is Poly(A) polymerase catalytic subunit (PAPL) (Fowlpox virus (strain NVSL) (FPV)).